A 109-amino-acid chain; its full sequence is Hainantoxin-XVIII-7 (109 aa).

The N-terminal stretch at 1-18 is a signal peptide; the sequence is MKLSIIIIATSLVIAVVA. A propeptide spanning residues 19–46 is cleaved from the precursor; sequence FPSKDSKAIENDKTEQRMEIVVQETARA. 4 disulfides stabilise this stretch: cysteine 47-cysteine 62, cysteine 55-cysteine 68, cysteine 59-cysteine 108, and cysteine 61-cysteine 81.

Belongs to the neurotoxin 25 family. F7 subfamily. In terms of tissue distribution, expressed by the venom gland.

Its subcellular location is the secreted. Putative ion channel inhibitor. This chain is Hainantoxin-XVIII-7, found in Cyriopagopus hainanus (Chinese bird spider).